Here is a 78-residue protein sequence, read N- to C-terminus: UPF0349 protein YuzB (78 aa).

It belongs to the UPF0349 family.

The protein is UPF0349 protein YuzB (yuzB) of Bacillus subtilis (strain 168).